The sequence spans 31 residues: Cytochrome b6-f complex subunit 6 (31 aa).

Residues 4–24 (ITSYFGFLLAVLTITSALFIG) traverse the membrane as a helical segment.

This sequence belongs to the PetL family. As to quaternary structure, the 4 large subunits of the cytochrome b6-f complex are cytochrome b6, subunit IV (17 kDa polypeptide, PetD), cytochrome f and the Rieske protein, while the 4 small subunits are PetG, PetL, PetM and PetN. The complex functions as a dimer.

Its subcellular location is the plastid. It localises to the chloroplast thylakoid membrane. Functionally, component of the cytochrome b6-f complex, which mediates electron transfer between photosystem II (PSII) and photosystem I (PSI), cyclic electron flow around PSI, and state transitions. PetL is important for photoautotrophic growth as well as for electron transfer efficiency and stability of the cytochrome b6-f complex. The protein is Cytochrome b6-f complex subunit 6 of Cucumis sativus (Cucumber).